The chain runs to 305 residues: Glycine--tRNA ligase alpha subunit (305 aa).

It belongs to the class-II aminoacyl-tRNA synthetase family. Tetramer of two alpha and two beta subunits.

It is found in the cytoplasm. It carries out the reaction tRNA(Gly) + glycine + ATP = glycyl-tRNA(Gly) + AMP + diphosphate. This is Glycine--tRNA ligase alpha subunit from Vibrio campbellii (strain ATCC BAA-1116).